The primary structure comprises 900 residues: MAASVDNRQYSTLNGVVRSFTPNNTYLHDPKPSFPAVNLDLDASSSDDDDEKDDASILKDLIRKGNAEIESSVLDPRDQGTADNWISRNSSMVRLTGKHPFNSEPPLPRLMHHGFITPVPLHYVRNHGPVPKARWDDWTVEVTGLVKTPTRFSMDRLVRDFPSRELPVTLVCAGNRRKEQNMVRQSIGFNWGSAGVSTSVWRGVSLRHILRRCRIQTRSRGALHVCFEGDEDLPGGGGSKYSTSIRREVAMDPSRDVILAYMQNGEVLAPDHGFPVRVIIPGFIGGRMVKWLKRIVVTEEECDGHYHYKDNRVLPSHVDAELANEEGWWYKPEYIINELNINSVITTPCHDEILPINAWTTQRPYTLRGYSYSGGGRKVTRVEVTLDGGETWFVCALDQQEKPNKYGKYWCWCFWSLEVEVLDLLGTKEIAVRAWDEALNTQPENLIWNVMGMMNNCWFRVKTNVCKPHKGEIGIVFEHPTQPGNQPGGWMAKEKHLEISQQDSRPILKKSVSSPFMNTFTKMYSLSEVKKHNSPDSAWIIVHGHVYDCTRFLKDHPGGADSILINAGTDCTEEFEAIHSDKAKKMLEDYRVGELITTGYTSDSSSPNNSLHGNSEFKHLAPIKEITTMSLPPLPRRKVALIPREKIPCKLISRTSISHDVRVFRFALPSEDQQLGLPVGKHIFLCATVDGKLCMRAYTPTSGVDEVGYFELVVKVYFKGVHPKFPNGGAMSQHLDSLPIGSDLDVKGPLGHIEYTGRGNFLVHGKHRFAKKLAMLAGGTGITPIYQVAQAILKDPEDHTKMYVVYANRTEDDILLREELDTWAKKYEDRFKVWYVVETAKEGWGYSVGFVTEGVMREHLPEAGDDALALACGPPPMIQFAVNPNLEKMGYDVKNDLLVF.

Residue cysteine 172 coordinates Mo-molybdopterin. The Cytochrome b5 heme-binding domain occupies 521 to 596 (TKMYSLSEVK…LEDYRVGELI (76 aa)). Residues histidine 556 and histidine 579 each contribute to the heme site. The FAD-binding FR-type domain maps to 644–756 (REKIPCKLIS…KGPLGHIEYT (113 aa)). FAD contacts are provided by residues 696–699 (RAYT), 713–717 (VVKVY), phenylalanine 718, phenylalanine 725, 730–732 (AMS), and threonine 783.

The protein belongs to the nitrate reductase family. Homodimer. Requires FAD as cofactor. Heme is required as a cofactor. It depends on Mo-molybdopterin as a cofactor.

It carries out the reaction nitrite + NAD(+) + H2O = nitrate + NADH + H(+). Nitrate reductase is a key enzyme involved in the first step of nitrate assimilation in plants, fungi and bacteria. This is Nitrate reductase [NADH] (NIA) from Lotus japonicus (Lotus corniculatus var. japonicus).